The following is a 200-amino-acid chain: NADH-quinone oxidoreductase subunit B (200 aa).

[4Fe-4S] cluster-binding residues include cysteine 78, cysteine 79, cysteine 144, and cysteine 174.

It belongs to the complex I 20 kDa subunit family. In terms of assembly, NDH-1 is composed of 14 different subunits. Subunits NuoB, C, D, E, F, and G constitute the peripheral sector of the complex. It depends on [4Fe-4S] cluster as a cofactor.

It localises to the cell membrane. The catalysed reaction is a quinone + NADH + 5 H(+)(in) = a quinol + NAD(+) + 4 H(+)(out). In terms of biological role, NDH-1 shuttles electrons from NADH, via FMN and iron-sulfur (Fe-S) centers, to quinones in the respiratory chain. The immediate electron acceptor for the enzyme in this species is believed to be ubiquinone. Couples the redox reaction to proton translocation (for every two electrons transferred, four hydrogen ions are translocated across the cytoplasmic membrane), and thus conserves the redox energy in a proton gradient. This Dehalococcoides mccartyi (strain ATCC BAA-2100 / JCM 16839 / KCTC 5957 / BAV1) protein is NADH-quinone oxidoreductase subunit B.